The primary structure comprises 550 residues: Glutamine--tRNA ligase (550 aa).

Residues 34–44 carry the 'HIGH' region motif; it reads PEPNGYLHLGH. Residues 35 to 37 and 41 to 47 each bind ATP; these read EPN and HLGHAKS. Positions 67 and 212 each coordinate L-glutamine. ATP is bound by residues T231, 261-262, and 269-271; these read RL and LSK. The 'KMSKS' region motif lies at 268–272; the sequence is VLSKR.

This sequence belongs to the class-I aminoacyl-tRNA synthetase family. As to quaternary structure, monomer.

The protein localises to the cytoplasm. The enzyme catalyses tRNA(Gln) + L-glutamine + ATP = L-glutaminyl-tRNA(Gln) + AMP + diphosphate. The chain is Glutamine--tRNA ligase from Buchnera aphidicola subsp. Baizongia pistaciae (strain Bp).